The following is a 461-amino-acid chain: Secreted 45 kDa protein (461 aa).

Residues 1-27 (MKKKIISAILMSTVILSAAAPLSGVYA) form the signal peptide. Residues 264–329 (SSASASSSQA…GNTNSGTSTG (66 aa)) are compositionally biased toward low complexity. The segment at 264 to 343 (SSASASSSQA…TTTGGSGINS (80 aa)) is disordered. Residues 330–340 (NTGGTTTGGSG) are compositionally biased toward gly residues. The region spanning 330–459 (NTGGTTTGGS…VSASGVTFLM (130 aa)) is the Peptidase C51 domain.

This is Secreted 45 kDa protein (usp45) from Lactococcus lactis subsp. cremoris (strain MG1363).